The chain runs to 160 residues: Lipoprotein signal peptidase (160 aa).

The next 3 membrane-spanning stretches (helical) occupy residues 13–33, 72–92, and 104–124; these read IYITTIIFILILDISSKRLII, WFLSTVSILTILVMTRIITKL, and SLIIAGATGNLIDRIFYGFVV. Catalysis depends on residues Asp125 and Asp143. The helical transmembrane segment at 134–154 threads the bilayer; the sequence is WHFATFNIADCSIFIGIIILM.

Belongs to the peptidase A8 family.

Its subcellular location is the cell inner membrane. The enzyme catalyses Release of signal peptides from bacterial membrane prolipoproteins. Hydrolyzes -Xaa-Yaa-Zaa-|-(S,diacylglyceryl)Cys-, in which Xaa is hydrophobic (preferably Leu), and Yaa (Ala or Ser) and Zaa (Gly or Ala) have small, neutral side chains.. It functions in the pathway protein modification; lipoprotein biosynthesis (signal peptide cleavage). This protein specifically catalyzes the removal of signal peptides from prolipoproteins. This Buchnera aphidicola subsp. Acyrthosiphon pisum (strain APS) (Acyrthosiphon pisum symbiotic bacterium) protein is Lipoprotein signal peptidase.